We begin with the raw amino-acid sequence, 579 residues long: MLNRAMENSDMKRNSSTLLDLPVVKSSLVVEAIHMSRKKLGWYNESRRDSETVKARVEAGLSEVKKSVEELALLIKRSNRSAGFQEKDMEVLKMEEKYAEVMRVLEVVKEEVSRVKLDVSSVLIERVAAEEKVEELRFKTEGGLRLLESLKKEIEVANEEHLMVALGKIEALKGYKEIERQREGKAIKVLDLLVERNKRIKNMLEEAERSKDIEIELFETSTDVEMLETQLKLFKKMERRVQGRDSSSMSRSNRSFGRGKYSLSVLKEVTEGKKEELASVKVEIFRVMTVMDALRNEIIRARDETACLGKILREDDVKIEKLNSKILIEKSKLEVVSIAEERISSLAENFVGSLEKIKKSRNAAKKEEFLFKEEKTVTKAETQKTKLDIDKKESELNSKLDELEKVKHTEALVLEKLESLVEDMMESREMESEHCSTITISRFEYEYLSKHASQAEETAEKKVAAAAAWVEALKASTKSFLMKTETLMRESEMTKAEEEREVFRMERSLSTKRLVEGEIQKIKRNSEAEGYISPKPVGKFTPVQRGKPRRYSSVGTPTFFVIKKKKKVPRLAKFFSRRS.

Coiled-coil stretches lie at residues 90–161 (EVLK…NEEH), 188–216 (KVLD…IEIE), 383–419 (QKTK…KLES), and 481–501 (LMKT…EERE).

The protein belongs to the WEB family.

Its function is as follows. Required for the chloroplast avoidance response under high intensity blue light. This avoidance response consists in the relocation of chloroplasts on the anticlinal side of exposed cells. In Arabidopsis thaliana (Mouse-ear cress), this protein is Protein PLASTID MOVEMENT IMPAIRED 15 (PMI15).